Reading from the N-terminus, the 72-residue chain is Variant surface glycoprotein MITAT 1.1000BC (72 aa).

The GPI-anchor amidated aspartate moiety is linked to residue Asp50. A propeptide spans 51–72 (GSFLVNKKFALMVYDFVSLLAF) (removed in mature form).

The protein resides in the cell membrane. VSG forms a coat on the surface of the parasite. The trypanosome evades the immune response of the host by expressing a series of antigenically distinct VSGs from an estimated 1000 VSG genes. The protein is Variant surface glycoprotein MITAT 1.1000BC of Trypanosoma brucei brucei.